We begin with the raw amino-acid sequence, 306 residues long: Oligopeptide transport system permease protein OppB (306 aa).

Residues 1–11 (MLKFILRRCLE) are Cytoplasmic-facing. Residues 12–32 (AIPTLFILITISFFMMRLAPG) form a helical membrane-spanning segment. Topologically, residues 33 to 99 (SPFTGERTLP…VASSFPVSAK (67 aa)) are periplasmic. An ABC transmembrane type-1 domain is found at 94–293 (FPVSAKLGAA…ALTILFNAIV (200 aa)). The chain crosses the membrane as a helical span at residues 100 to 120 (LGAAAFFLAVILGVSAGVIAA). At 121–137 (LKQNTKWDYTVMGLAMT) the chain is on the cytoplasmic side. The chain crosses the membrane as a helical span at residues 138–158 (GVVIPSFVVAPLLVMIFAIIL). The Periplasmic segment spans residues 159-169 (HWLPGGGWNGG). A helical transmembrane segment spans residues 170-190 (ALKFMILPMVALSLAYIASIA). The Cytoplasmic portion of the chain corresponds to 191 to 229 (RITRGSMIEVLHSNFIRTARAKGLPMRRIILRHALKPAL). Residues 230–250 (LPVLSYMGPAFVGIITGSMVI) traverse the membrane as a helical segment. Residues 251–279 (ETIYGLPGIGQLFVNGALNRDYSLVLSLT) lie on the Periplasmic side of the membrane. A helical transmembrane segment spans residues 280 to 300 (ILVGALTILFNAIVDVLYAVI). The Cytoplasmic segment spans residues 301–306 (DPKIRY).

The protein belongs to the binding-protein-dependent transport system permease family. OppBC subfamily. As to quaternary structure, the complex is composed of two ATP-binding proteins (OppD and OppF), two transmembrane proteins (OppB and OppC) and a solute-binding protein (OppA).

It is found in the cell inner membrane. Its function is as follows. Part of the ABC transporter complex OppABCDF involved in the uptake of oligopeptides. Probably responsible for the translocation of the substrate across the membrane. The sequence is that of Oligopeptide transport system permease protein OppB (oppB) from Shigella flexneri.